The chain runs to 424 residues: Elongation factor 1-alpha (424 aa).

Residues 5 to 223 form the tr-type G domain; that stretch reads KPHLNLITIG…DAFKVPEKPI (219 aa). The segment at 14 to 21 is G1; that stretch reads GHVDHGKS. 14-21 lines the GTP pocket; sequence GHVDHGKS. Ser21 provides a ligand contact to Mg(2+). Residues 70–74 form a G2 region; the sequence is GVTID. Residues 91–94 form a G3 region; that stretch reads DAPG. Residues 91–95 and 148–151 each bind GTP; these read DAPGH and NKMD. The interval 148–151 is G4; sequence NKMD. The tract at residues 187 to 189 is G5; that stretch reads SGY.

Belongs to the TRAFAC class translation factor GTPase superfamily. Classic translation factor GTPase family. EF-Tu/EF-1A subfamily.

It localises to the cytoplasm. The catalysed reaction is GTP + H2O = GDP + phosphate + H(+). In terms of biological role, GTP hydrolase that promotes the GTP-dependent binding of aminoacyl-tRNA to the A-site of ribosomes during protein biosynthesis. The polypeptide is Elongation factor 1-alpha (Thermoplasma volcanium (strain ATCC 51530 / DSM 4299 / JCM 9571 / NBRC 15438 / GSS1)).